The chain runs to 370 residues: Endopolygalacturonase A (370 aa).

The N-terminal stretch at 1-19 is a signal peptide; the sequence is MPSAKPLFCLATLAGAALA. Positions 20-32 are excised as a propeptide; it reads APAPSRATDFNKR. C35 and C50 are oxidised to a cystine. 6 PbH1 repeats span residues 162-192, 193-214, 215-235, 244-265, 273-295, and 307-352; these read SDNL…DISE, STYI…AINS, GENI…SIGS, VKNV…RIKT, VEDI…VIEQ, and SNGV…DITG. The cysteines at positions 209 and 225 are disulfide-linked. The active site involves H229. N-linked (GlcNAc...) asparagine glycosylation occurs at N246. Intrachain disulfides connect C335-C340 and C359-C368.

Belongs to the glycosyl hydrolase 28 family.

The protein localises to the secreted. The enzyme catalyses (1,4-alpha-D-galacturonosyl)n+m + H2O = (1,4-alpha-D-galacturonosyl)n + (1,4-alpha-D-galacturonosyl)m.. In terms of biological role, involved in maceration and soft-rotting of plant tissue. Hydrolyzes the 1,4-alpha glycosidic bonds of de-esterified pectate in the smooth region of the plant cell wall. In Aspergillus awamori (Black koji mold), this protein is Endopolygalacturonase A (pgaA).